Reading from the N-terminus, the 591-residue chain is NADPH oxidase 1 (591 aa).

The Cytoplasmic segment spans residues 1–36 (MAGELRGSRGPLQRIQIAPREAPNLHLTMGNWLVNH). A helical transmembrane segment spans residues 37–59 (WLSVLFLVSWLGLNIFLFVYAFL). At 60 to 72 (NYEKSDKYYYTRE) the chain is on the extracellular side. Residues 73-97 (ILGTALALARASALCLNFNSMMILI) traverse the membrane as a helical segment. Residues 82–316 (RASALCLNFN…YIFERILRFY (235 aa)) enclose the Ferric oxidoreductase domain. The Cytoplasmic segment spans residues 98-130 (PVCRNLLSFLRGTCSFCNRTLRKPLDHNLTFHK). Positions 129 and 143 each coordinate heme. Residues 131–151 (LVAYMICIFTVIHIIAHLFNF) form a helical membrane-spanning segment. The Extracellular portion of the chain corresponds to 152–195 (ERYRRSQQAMDGSLASVLSSLSHPEKEDSWLNPIQSPNMTVMYA). A glycan (N-linked (GlcNAc...) asparagine) is linked at Asn189. The chain crosses the membrane as a helical span at residues 196–216 (AFTSIAGLTGVIATVALVLMV). At 217 to 234 (TSAMEFIRRNYFELFWYT) the chain is on the cytoplasmic side. A helical transmembrane segment spans residues 235–255 (HHLFIVYIICLGIHGLGGIVR). Heme contacts are provided by His236 and His248. At 256 to 423 (GQTEESLGES…TVSEDVFQYE (168 aa)) the chain is on the extracellular side. A glycan (N-linked (GlcNAc...) asparagine) is linked at Asn269. The 102-residue stretch at 317-418 (RSQQKVVITK…DGPFGTVSED (102 aa)) folds into the FAD-binding FR-type domain. 365 to 371 (HPFTLTS) is an FAD binding site. The helical transmembrane segment at 424–444 (VAVLVGAGIGVTPFASILKSI) threads the bilayer. Residues 424–563 (VAVLVGAGIG…GVFLCGPRTL (140 aa)) form an interaction with NOXO1 region. The Cytoplasmic segment spans residues 445-591 (WYKFQRADNK…VQFYFNKETF (147 aa)). At Thr457 the chain carries Phosphothreonine.

As to quaternary structure, NOX1, NOXA1, NOXO1, RAC1 and CYBA forms a functional multimeric complex supporting ROS production. Interacts with NOXO1. Interacts (via FAD-binding FR-type domain) with ARHGEF7 (via PH domain). Interacts with NOXA1. FAD is required as a cofactor. In terms of processing, phosphorylation at Thr-457 mediated by PKC/PRKBC positively regulates its interaction with NOXA1 and enzyme activity. As to expression, expressed in colon and vascular smooth muscle cells (VSMC).

The protein resides in the cell projection. It localises to the invadopodium membrane. Its subcellular location is the cell membrane. The catalysed reaction is NADPH + 2 O2 = 2 superoxide + NADP(+) + H(+). Its activity is regulated as follows. The oxidase activity is potentiated by NOXA1 and NOXO1. Its function is as follows. NADPH oxidase that catalyzes the generation of superoxide from molecular oxygen utilizing NADPH as an electron donor. The sequence is that of NADPH oxidase 1 (Nox1) from Mus musculus (Mouse).